A 352-amino-acid polypeptide reads, in one-letter code: Histidinol-phosphate aminotransferase (352 aa).

N6-(pyridoxal phosphate)lysine is present on Lys-221.

The protein belongs to the class-II pyridoxal-phosphate-dependent aminotransferase family. Histidinol-phosphate aminotransferase subfamily. Homodimer. Pyridoxal 5'-phosphate is required as a cofactor.

It carries out the reaction L-histidinol phosphate + 2-oxoglutarate = 3-(imidazol-4-yl)-2-oxopropyl phosphate + L-glutamate. It participates in amino-acid biosynthesis; L-histidine biosynthesis; L-histidine from 5-phospho-alpha-D-ribose 1-diphosphate: step 7/9. The protein is Histidinol-phosphate aminotransferase of Staphylococcus aureus (strain MSSA476).